The chain runs to 242 residues: DnaJ homolog subfamily B member 3 (242 aa).

The J domain maps to 1–69 (MVDYYEVLGV…RKREVYDRCG (69 aa)).

Testis specific. Expression is confined to the germline without any contribution of the somatic components.

May operate as a co-chaperone of the male germ cell- and haploid stage-specific Hsp70 proteins. The protein is DnaJ homolog subfamily B member 3 (Dnajb3) of Mus musculus (Mouse).